The sequence spans 126 residues: Small ribosomal subunit protein uS11 (126 aa).

This sequence belongs to the universal ribosomal protein uS11 family. Part of the 30S ribosomal subunit.

Its function is as follows. Located on the platform of the 30S subunit. The polypeptide is Small ribosomal subunit protein uS11 (Methanosarcina barkeri (strain Fusaro / DSM 804)).